The primary structure comprises 57 residues: UPF0509 protein YciZ (57 aa).

It belongs to the UPF0509 family.

In Shigella flexneri, this protein is UPF0509 protein YciZ (yciZ).